Reading from the N-terminus, the 385-residue chain is Initiation-specific alpha-1,6-mannosyltransferase (385 aa).

The Cytoplasmic portion of the chain corresponds to 1 to 15; it reads MLQLREPQMVHKHLK. A helical; Signal-anchor for type II membrane protein membrane pass occupies residues 16 to 36; the sequence is LAVLGIVVIFTTYFIISSLSS. Topologically, residues 37–385 are lumenal; that stretch reads PTSTHKTEYN…KDDGMPEMEQ (349 aa). The short motif at 189–191 is the DXD motif element; it reads DID.

Belongs to the glycosyltransferase 32 family. Mn(2+) serves as cofactor.

The protein localises to the endoplasmic reticulum membrane. The protein resides in the golgi apparatus membrane. It carries out the reaction Transfers an alpha-D-mannosyl residue from GDP-mannose into lipid-linked oligosaccharide, forming an alpha-(1-&gt;6)-D-mannosyl-D-mannose linkage.. Functionally, mannosyltransferase involved in outer chain elongation of asparagine-linked oligosaccharides of the type Man(9)GlcNAc(2). Adds the first alpha-1,6-mannose to the Man(8)GlcNAc(2) and Man(9)GlcNAc(2), but not Man(5)GlcNAc(2), endoplasmic reticulum intermediates. Represents the first enzymatic event required for synthesis of outer chain mannose linkages on yeast secretory proteins. N-glycan outer chain epitopes play a crucial role in the host-fungal interaction, virulence, and host immune response such as interleukin synthesis or phagocytosis by neutrophils. The chain is Initiation-specific alpha-1,6-mannosyltransferase from Candida albicans (strain SC5314 / ATCC MYA-2876) (Yeast).